We begin with the raw amino-acid sequence, 430 residues long: Asparagine--tRNA ligase (430 aa).

It belongs to the class-II aminoacyl-tRNA synthetase family.

It is found in the cytoplasm. The enzyme catalyses tRNA(Asn) + L-asparagine + ATP = L-asparaginyl-tRNA(Asn) + AMP + diphosphate + H(+). The sequence is that of Asparagine--tRNA ligase from Thermococcus gammatolerans (strain DSM 15229 / JCM 11827 / EJ3).